The following is a 412-amino-acid chain: BSD domain-containing protein 1 (412 aa).

One can recognise a BSD domain in the interval tryptophan 145 to glutamate 197. Residues glutamine 208 to glutamate 217 are compositionally biased toward basic and acidic residues. 3 disordered regions span residues glutamine 208 to glutamate 227, valine 253 to serine 272, and glutamate 298 to glutamate 412. Composition is skewed to polar residues over residues proline 259–serine 272 and glutamate 298–serine 308. Residue serine 308 is modified to Phosphoserine. Basic and acidic residues predominate over residues proline 328 to valine 349. Residues asparagine 353–aspartate 372 are compositionally biased toward polar residues. Composition is skewed to acidic residues over residues valine 373–valine 390 and threonine 400–glutamate 412.

In Danio rerio (Zebrafish), this protein is BSD domain-containing protein 1 (bsdc1).